The following is a 219-amino-acid chain: Large ribosomal subunit protein uL1 (219 aa).

This sequence belongs to the universal ribosomal protein uL1 family. Part of the 50S ribosomal subunit.

Probably involved in E site tRNA release. Binds directly to 23S rRNA. Functionally, protein L1 is also a translational repressor protein, it controls the translation of its operon by binding to its mRNA. This chain is Large ribosomal subunit protein uL1, found in Methanocaldococcus jannaschii (strain ATCC 43067 / DSM 2661 / JAL-1 / JCM 10045 / NBRC 100440) (Methanococcus jannaschii).